The following is a 176-amino-acid chain: NAD(P)H-quinone oxidoreductase subunit 6, chloroplastic (176 aa).

5 helical membrane-spanning segments follow: residues 10–30 (ILVL…VLLT), 33–53 (IYSA…YFLL), 60–80 (VAQL…AVMF), 95–115 (IGDG…MTTI), and 152–172 (FYLP…GAIT).

This sequence belongs to the complex I subunit 6 family. As to quaternary structure, NDH is composed of at least 16 different subunits, 5 of which are encoded in the nucleus.

It localises to the plastid. It is found in the chloroplast thylakoid membrane. The catalysed reaction is a plastoquinone + NADH + (n+1) H(+)(in) = a plastoquinol + NAD(+) + n H(+)(out). It carries out the reaction a plastoquinone + NADPH + (n+1) H(+)(in) = a plastoquinol + NADP(+) + n H(+)(out). In terms of biological role, NDH shuttles electrons from NAD(P)H:plastoquinone, via FMN and iron-sulfur (Fe-S) centers, to quinones in the photosynthetic chain and possibly in a chloroplast respiratory chain. The immediate electron acceptor for the enzyme in this species is believed to be plastoquinone. Couples the redox reaction to proton translocation, and thus conserves the redox energy in a proton gradient. The polypeptide is NAD(P)H-quinone oxidoreductase subunit 6, chloroplastic (ndhG) (Brachypodium distachyon (Purple false brome)).